Reading from the N-terminus, the 272-residue chain is Tryptophan synthase alpha chain (272 aa).

Active-site proton acceptor residues include Glu-49 and Asp-60.

The protein belongs to the TrpA family. Tetramer of two alpha and two beta chains.

The catalysed reaction is (1S,2R)-1-C-(indol-3-yl)glycerol 3-phosphate + L-serine = D-glyceraldehyde 3-phosphate + L-tryptophan + H2O. Its pathway is amino-acid biosynthesis; L-tryptophan biosynthesis; L-tryptophan from chorismate: step 5/5. In terms of biological role, the alpha subunit is responsible for the aldol cleavage of indoleglycerol phosphate to indole and glyceraldehyde 3-phosphate. This chain is Tryptophan synthase alpha chain, found in Polaromonas sp. (strain JS666 / ATCC BAA-500).